The primary structure comprises 55 residues: Large ribosomal subunit protein bL33 (55 aa).

This sequence belongs to the bacterial ribosomal protein bL33 family.

This chain is Large ribosomal subunit protein bL33, found in Maricaulis maris (strain MCS10) (Caulobacter maris).